We begin with the raw amino-acid sequence, 319 residues long: Taste receptor type 2 member 7 (319 aa).

The Extracellular portion of the chain corresponds to 1-9; the sequence is MADKVQTTL. A helical transmembrane segment spans residues 10-30; sequence LFLAVGEFSVGILGNAFIGLV. Topologically, residues 31–55 are cytoplasmic; the sequence is NCMDWVKKRKIASIDLILTSLAISR. A helical transmembrane segment spans residues 56–76; it reads ICLLCVILLDCFILVLYPDVY. Over 77-94 the chain is Extracellular; that stretch reads ATGKEMRIIDFFWTLTNH. Residues 95-115 traverse the membrane as a helical segment; sequence LSIWFATCLSIYYXFRIANFF. Residues 116 to 128 are Cytoplasmic-facing; the sequence is HPLFLWMKWRIDR. A helical transmembrane segment spans residues 129 to 149; sequence VISWILLGCVVLSVFISLPAT. The Extracellular portion of the chain corresponds to 150-187; that stretch reads ENLNADFRFCVKAKRKTNLTWSCRVNKTQHASTKLFLN. N-linked (GlcNAc...) asparagine glycosylation is found at asparagine 167 and asparagine 175. The helical transmembrane segment at 188–208 threads the bilayer; it reads LATLLPFCVCLMSFFLLILSL. Residues 209–235 are Cytoplasmic-facing; sequence RRHIRRMQLSATGCRDPSTEAHVRALK. Residues 236–256 form a helical membrane-spanning segment; sequence AVISFLLLFIAYYLSFLVATS. At 257 to 266 the chain is on the extracellular side; it reads SYFMPETELA. A helical transmembrane segment spans residues 267–287; sequence VIFGESIALIYPSSHSFILIL. Over 288–319 the chain is Cytoplasmic; that stretch reads GNNKLRHASLKVIWKVMSILKGRKFQQHKQIG.

This sequence belongs to the G-protein coupled receptor T2R family.

Its subcellular location is the membrane. Functionally, gustducin-coupled receptor implicated in the perception of bitter compounds in the oral cavity and the gastrointestinal tract. Signals through PLCB2 and the calcium-regulated cation channel TRPM5. The polypeptide is Taste receptor type 2 member 7 (TAS2R7) (Pan troglodytes (Chimpanzee)).